Here is a 317-residue protein sequence, read N- to C-terminus: tRNA-cytidine(32) 2-sulfurtransferase (317 aa).

Residues 46–51 carry the PP-loop motif motif; the sequence is SGGKDS. [4Fe-4S] cluster is bound by residues C121, C124, and C212.

It belongs to the TtcA family. Homodimer. Requires Mg(2+) as cofactor. [4Fe-4S] cluster is required as a cofactor.

It is found in the cytoplasm. It catalyses the reaction cytidine(32) in tRNA + S-sulfanyl-L-cysteinyl-[cysteine desulfurase] + AH2 + ATP = 2-thiocytidine(32) in tRNA + L-cysteinyl-[cysteine desulfurase] + A + AMP + diphosphate + H(+). The protein operates within tRNA modification. In terms of biological role, catalyzes the ATP-dependent 2-thiolation of cytidine in position 32 of tRNA, to form 2-thiocytidine (s(2)C32). The sulfur atoms are provided by the cysteine/cysteine desulfurase (IscS) system. The protein is tRNA-cytidine(32) 2-sulfurtransferase of Shewanella loihica (strain ATCC BAA-1088 / PV-4).